Consider the following 630-residue polypeptide: Polypeptide N-acetylgalactosaminyltransferase 5 (630 aa).

Over 1–20 the chain is Cytoplasmic; that stretch reads MTFSTFTRKMRGRMRSNTCR. Residues 21–38 traverse the membrane as a helical; Signal-anchor for type II membrane protein segment; it reads IVLLTSLVWVIFDFVLIA. At 39 to 630 the chain is on the lumenal side; the sequence is RYSDCIGKDG…MESKFKWQAH (592 aa). Asn166 is a glycosylation site (N-linked (GlcNAc...) asparagine). Cystine bridges form between Cys177–Cys410, Cys401–Cys479, Cys513–Cys530, Cys553–Cys568, and Cys594–Cys611. The tract at residues 186–296 is catalytic subdomain A; the sequence is LPTTSIVIVF…EGWLEPLLAR (111 aa). 2 residues coordinate substrate: Asp227 and Arg257. Mn(2+)-binding residues include Asp280 and His282. Residues 356–418 are catalytic subdomain B; the sequence is PLRTPTMAGG…PCSHVGHVFR (63 aa). Trp387 is a substrate binding site. His415 is a Mn(2+) binding site. Residues Arg418 and Tyr423 each contribute to the substrate site. Positions 500–622 constitute a Ricin B-type lectin domain; sequence YYLGEIRNAE…YGKGQQWLME (123 aa).

The protein belongs to the glycosyltransferase 2 family. GalNAc-T subfamily. It depends on Mn(2+) as a cofactor. As to expression, expressed during oogenesis, in the somatically derived follicle cells that surround the developing oocyte, which are involved in the maturation of the oocyte and construction of the egg shell, as well as playing a role in subsequent embryonic pattern formation. During embryonic stages 9-11, expressed in the primordium of the foregut, midgut and hindgut. Expressed in salivary glands from embryonic stage 12 onwards. During embryonic stages 12-13, expressed in the posterior midgut and hindgut. During embryonic stages 14-17, expressed in the hindgut and the posterior spiracles. Expression is also detected in the epidermis and antennomaxillary complex at embryonic stages 16-17. In third instar larvae, ubiquitously expressed in wing, eye-antennal, leg and haltere imaginal disks.

It is found in the golgi apparatus membrane. It catalyses the reaction L-seryl-[protein] + UDP-N-acetyl-alpha-D-galactosamine = a 3-O-[N-acetyl-alpha-D-galactosaminyl]-L-seryl-[protein] + UDP + H(+). It carries out the reaction L-threonyl-[protein] + UDP-N-acetyl-alpha-D-galactosamine = a 3-O-[N-acetyl-alpha-D-galactosaminyl]-L-threonyl-[protein] + UDP + H(+). It participates in protein modification; protein glycosylation. Its function is as follows. Catalyzes the initial reaction in O-linked oligosaccharide biosynthesis, the transfer of an N-acetyl-D-galactosamine residue to a serine or threonine residue on the protein receptor. It can both act as a peptide transferase that transfers GalNAc onto unmodified peptide substrates, and as a glycopeptide transferase that requires the prior addition of a GalNAc on a peptide before adding additional GalNAc moieties. Prefers EA2 as substrate. In the larval midgut, required for O-glycosylation of apical and luminal proteins within copper cells enabling proper gut acidification. The protein is Polypeptide N-acetylgalactosaminyltransferase 5 of Drosophila melanogaster (Fruit fly).